A 487-amino-acid chain; its full sequence is Sodium-coupled neutral amino acid symporter 1 (487 aa).

Topologically, residues 1-74 (MMHFKSGLEL…EYIPGTTSLG (74 aa)) are cytoplasmic. Phosphoserine is present on Ser6. Thr11 is subject to Phosphothreonine. Phosphoserine is present on residues Ser25, Ser28, Ser49, and Ser52. Phosphothreonine is present on Thr54. Ser56 carries the phosphoserine modification. A helical membrane pass occupies residues 75–97 (MSVFNLSNAIMGSGILGLAFALA). The Extracellular segment spans residues 98 to 112 (NTGILLFLVLLTSVT). The helical transmembrane segment at 113–133 (LLSIYSINLLLICSKETGCMV) threads the bilayer. Over 134–147 (YEKLGEQVFGTTGK) the chain is Cytoplasmic. Residues 148-168 (FVIFGATSLQNTGAMLSYLFI) form a helical membrane-spanning segment. The Extracellular segment spans residues 169–188 (VKNELPSAIKFLMGKEETFS). Residues 189 to 211 (AWYVDGRVLVVIVTFGIILPLCL) traverse the membrane as a helical segment. The Cytoplasmic portion of the chain corresponds to 212 to 216 (LKNLG). A helical membrane pass occupies residues 217–237 (YLGYTSGFSLSCMVFFLIVVI). Residues 238 to 275 (YKKFQIPCIVPELNSTISANSTNADTCTPKYVTFNSKT) are Extracellular-facing. Cys245 and Cys264 are joined by a disulfide. Residues Asn251 and Asn257 are each glycosylated (N-linked (GlcNAc...) asparagine). The helical transmembrane segment at 276 to 296 (VYALPTIAFAFVCHPSVLPIY) threads the bilayer. At 297–312 (SELKDRSQKKMQMVSN) the chain is on the cytoplasmic side. Residues 313 to 333 (ISFFAMFVMYFLTAIFGYLTF) form a helical membrane-spanning segment. Residues 334 to 350 (YDNVQSDLLHKYQSKDD) lie on the Extracellular side of the membrane. Residues 351–371 (ILILTVRLAVIVAVILTVPVL) traverse the membrane as a helical segment. The Cytoplasmic segment spans residues 372–393 (FFTVRSSLFELAKKTKFNLCRH). A helical transmembrane segment spans residues 394 to 414 (TVVTCILLVVINLLVIFIPSM). At 415 to 416 (KD) the chain is on the extracellular side. A helical membrane pass occupies residues 417–437 (IFGVVGVTSANMLIFILPSSL). Residues 438–452 (YLKITDQDGDKGTQR) lie on the Cytoplasmic side of the membrane. The chain crosses the membrane as a helical span at residues 453–473 (IWAALFLGLGVLFSLVSIPLV). The Extracellular segment spans residues 474-487 (IYDWACSSSSDEGH).

This sequence belongs to the amino acid/polyamine transporter 2 family. N-glycosylation plays an important role in the L-glutamine transport. As to expression, expressed in the cerebral cortex by pyramidal and GABAergic neurons, astrocytes and other non-neuronal cells (at protein level). Expressed in placenta, heart, lung, skeletal muscle, spleen, stomach and testis. Highly expressed in cytotrophoblast cells from term placenta.

The protein resides in the cell membrane. It catalyses the reaction L-glutamine(in) + Na(+)(in) = L-glutamine(out) + Na(+)(out). It carries out the reaction L-alanine(in) + Na(+)(in) = L-alanine(out) + Na(+)(out). The enzyme catalyses L-asparagine(in) + Na(+)(in) = L-asparagine(out) + Na(+)(out). The catalysed reaction is L-histidine(in) + Na(+)(in) = L-histidine(out) + Na(+)(out). It catalyses the reaction L-serine(in) + Na(+)(in) = L-serine(out) + Na(+)(out). It carries out the reaction L-cysteine(in) + Na(+)(in) = L-cysteine(out) + Na(+)(out). The enzyme catalyses L-methionine(in) + Na(+)(in) = L-methionine(out) + Na(+)(out). The catalysed reaction is glycine(in) + Na(+)(in) = glycine(out) + Na(+)(out). It catalyses the reaction L-threonine(in) + Na(+)(in) = L-threonine(out) + Na(+)(out). It carries out the reaction L-proline(in) + Na(+)(in) = L-proline(out) + Na(+)(out). With respect to regulation, inhibited by alpha-(methylamino)isobutyric acid (MeAIB). Inhibited by lithium, potassium, choline ions, N-methylglucamine. The pH dependence has an allosteric effect on the transport. Its function is as follows. Symporter that cotransports short-chain neutral amino acids and sodium ions from the extraccellular to the intracellular side of the cell membrane. The transport is elctrogenic, pH dependent and driven by the Na(+) electrochemical gradient. Participates in the astroglia-derived glutamine transport into GABAergic interneurons for neurotransmitter GABA de novo synthesis. May also contributes to amino acid transport in placental trophoblasts. Also regulates synaptic plasticity. This chain is Sodium-coupled neutral amino acid symporter 1 (SLC38A1), found in Homo sapiens (Human).